A 53-amino-acid polypeptide reads, in one-letter code: UPF0391 membrane protein GFO_1615 (53 aa).

Helical transmembrane passes span leucine 4–alanine 24 and alanine 27–leucine 47.

This sequence belongs to the UPF0391 family.

It localises to the cell membrane. In Christiangramia forsetii (strain DSM 17595 / CGMCC 1.15422 / KT0803) (Gramella forsetii), this protein is UPF0391 membrane protein GFO_1615.